A 365-amino-acid chain; its full sequence is MSLIRKKGFYKQDVNKXXXELXKTYVSPTHVGSGAYGSVCSAIDKRSGEKVAIKKLSRPFQSEIFAKRAYRELLLLKHMQHENVIGLLDVFTPASSLRNFHDFYLVMXFMQTDLQKIMXMEFSEEKIQYLVYQMLKGLKYIHSAGVVHRDLKPGNLAVNEDCELKILDFGLARHADAEMTGYVVTRWYRAPEVILSWMHYNQTVDIWSVGCIMAEMLTGKTLFKGKDYLDQLTQILKVTGVPGTEFVQKLNDXAAKSYIQSLPQTPRKDFTQLFPRASPQAADLLEKMLELDVDKRLTAAQALTHPFFEPFRDPEEETEAQQPFDDSLEHEKLTVDEWKQHIYKEIVNFSPIARKDSRRRXGXKL.

The Protein kinase domain maps to 25–308; sequence YVSPTHVGSG…AAQALTHPFF (284 aa). 31-39 lines the ATP pocket; it reads VGSGAYGSV. Serine 47 carries the post-translational modification Phosphoserine. An ATP-binding site is contributed by lysine 54. Aspartate 150 functions as the Proton acceptor in the catalytic mechanism. Residue threonine 180 is modified to Phosphothreonine; by MAP2K3, MAP2K4, MAP2K6 and MAP2K7. Positions 180 to 182 match the TXY motif; sequence TGY. The residue at position 182 (tyrosine 182) is a Phosphotyrosine; by MAP2K3, MAP2K4, MAP2K6 and MAP2K7. Residue serine 350 is modified to Phosphoserine.

Belongs to the protein kinase superfamily. CMGC Ser/Thr protein kinase family. MAP kinase subfamily. As to quaternary structure, interacts with MAPK8IP2. Mg(2+) is required as a cofactor. Post-translationally, dually phosphorylated on Thr-180 and Tyr-182 by MAP2K3/MKK3, MAP2K4/MKK4, MAP2K6/MKK6 and MAP2K7/MKK7, which activates the enzyme. Dephosphorylated by dual specificity phosphatase DUSP1.

The enzyme catalyses L-seryl-[protein] + ATP = O-phospho-L-seryl-[protein] + ADP + H(+). It carries out the reaction L-threonyl-[protein] + ATP = O-phospho-L-threonyl-[protein] + ADP + H(+). Its activity is regulated as follows. Activated by phosphorylation on threonine and tyrosine by dual specificity kinases, MAP2K3/MKK3, MAP2K6/MKK6, MAP2K4/MKK4 and MAP2K7/MKK7. Activation by ultraviolet radiation, hyperosmotic shock, anisomycin or by TNF-alpha is mediated by MAP2K3/MKK3. Inhibited by dual specificity phosphatase DUSP1. Serine/threonine kinase which acts as an essential component of the MAP kinase signal transduction pathway. MAPK13 is one of the four p38 MAPKs which play an important role in the cascades of cellular responses evoked by extracellular stimuli such as pro-inflammatory cytokines or physical stress leading to direct activation of transcription factors such as ELK1 and ATF2. Accordingly, p38 MAPKs phosphorylate a broad range of proteins and it has been estimated that they may have approximately 200 to 300 substrates each. MAPK13 is one of the less studied p38 MAPK isoforms. Some of the targets are downstream kinases such as MAPKAPK2, which are activated through phosphorylation and further phosphorylate additional targets. Plays a role in the regulation of protein translation by phosphorylating and inactivating EEF2K. Involved in cytoskeletal remodeling through phosphorylation of MAPT and STMN1. Mediates UV irradiation induced up-regulation of the gene expression of CXCL14. Plays an important role in the regulation of epidermal keratinocyte differentiation, apoptosis and skin tumor development. Phosphorylates the transcriptional activator MYB in response to stress which leads to rapid MYB degradation via a proteasome-dependent pathway. MAPK13 also phosphorylates and down-regulates PRKD1 during regulation of insulin secretion in pancreatic beta cells. This is Mitogen-activated protein kinase 13 (MAPK13) from Pan troglodytes (Chimpanzee).